A 245-amino-acid chain; its full sequence is Probable transcriptional regulatory protein SUN_1622 (245 aa).

Belongs to the TACO1 family.

The protein resides in the cytoplasm. The protein is Probable transcriptional regulatory protein SUN_1622 of Sulfurovum sp. (strain NBC37-1).